A 493-amino-acid polypeptide reads, in one-letter code: CBL-interacting protein kinase 26 (493 aa).

In terms of domain architecture, Protein kinase spans 12–266 (YEIGRQLGQG…IPKIKRSAWY (255 aa)). Residues 18–26 (LGQGNFAKV) and Lys41 contribute to the ATP site. The active-site Proton acceptor is the Asp134. An activation loop region spans residues 152-181 (DFGLSALSESKRHDGLLHTTCGTPAYVAPE). A disordered region spans residues 311–332 (KVYTNGEATTSDSPECSNSDGK). A compositionally biased stretch (polar residues) spans 316 to 332 (GEATTSDSPECSNSDGK). The 41-residue stretch at 320–360 (TSDSPECSNSDGKQASLSLPNLNAFDIISLSTGFDLSNLFE) folds into the NAF domain. Residues 365 to 394 (RREERFTTRQPAAAIFAKLNELARRFKLKI) are PPI. The tract at residues 465–493 (GQHQQPEQSMQGMQGEQQPSRLPSQQPQG) is disordered.

It belongs to the protein kinase superfamily. CAMK Ser/Thr protein kinase family. SNF1 subfamily. The cofactor is Mn(2+).

The enzyme catalyses L-seryl-[protein] + ATP = O-phospho-L-seryl-[protein] + ADP + H(+). It carries out the reaction L-threonyl-[protein] + ATP = O-phospho-L-threonyl-[protein] + ADP + H(+). In terms of biological role, CIPK serine-threonine protein kinases interact with CBL proteins. Binding of a CBL protein to the regulatory NAF domain of CIPK protein lead to the activation of the kinase in a calcium-dependent manner. The protein is CBL-interacting protein kinase 26 (CIPK26) of Oryza sativa subsp. japonica (Rice).